Reading from the N-terminus, the 311-residue chain is MASSEELTATGYIQHHLQNLTYGKLPAGYVRHNADGTHTELAANTWTFAHTAQEAKDMGFMAVHVDTLGWGIFLALLLGFIFRSAVKKAHTGKPSGLLSFVEFLVEGINSVVKDIFHHKNRLIAPMGLTIFSWVFMMNLMDLIPVDWLPMLAQVVTGDSHTFFKVVPTTDPNATLGMAFTVFALMIMFSIKEKGALGFVKELTCHPFFAPKKLWYLNILLIPVNTILETVALIAKPISLGLRLFGNMYAGEMIFILIALLFSVGLVMGFVGGVLQWAWAVFHILVITLQAFIFMVLTTVYMAMAHDNHDEH.

6 helical membrane passes run 62 to 82 (AVHV…GFIF), 123 to 143 (IAPM…MDLI), 170 to 190 (DPNA…MFSI), 213 to 233 (LWYL…VALI), 253 to 273 (IFIL…VGGV), and 276 to 296 (WAWA…FMVL).

It belongs to the ATPase A chain family. In terms of assembly, F-type ATPases have 2 components, CF(1) - the catalytic core - and CF(0) - the membrane proton channel. CF(1) has five subunits: alpha(3), beta(3), gamma(1), delta(1), epsilon(1). CF(0) has three main subunits: a(1), b(2) and c(9-12). The alpha and beta chains form an alternating ring which encloses part of the gamma chain. CF(1) is attached to CF(0) by a central stalk formed by the gamma and epsilon chains, while a peripheral stalk is formed by the delta and b chains.

The protein resides in the cell inner membrane. Functionally, key component of the proton channel; it plays a direct role in the translocation of protons across the membrane. This Saccharophagus degradans (strain 2-40 / ATCC 43961 / DSM 17024) protein is ATP synthase subunit a.